Consider the following 355-residue polypeptide: Fe-S cluster assembly protein DRE2 (355 aa).

Residues 23–156 (TSFNPRTLLL…KPDYSASVAV (134 aa)) are N-terminal SAM-like domain. A linker region spans residues 157-247 (PLRLRRKDNS…EDTLLTEEDM (91 aa)). The tract at residues 189 to 214 (RKSVDMTDDVPEKDVPKVDSPKNDAP) is disordered. A compositionally biased stretch (basic and acidic residues) spans 190-213 (KSVDMTDDVPEKDVPKVDSPKNDA). Residues C257, C268, C271, and C273 each contribute to the [2Fe-2S] cluster site. The interval 257-273 (CAPRAGKRRRACKDCTC) is fe-S binding site A. [4Fe-4S] cluster contacts are provided by C318, C321, C329, and C332. 2 short sequence motifs (cx2C motif) span residues 318 to 321 (CGNC) and 329 to 332 (CDGC). Residues 318–332 (CGNCSLGDAFRCDGC) are fe-S binding site B.

Belongs to the anamorsin family. In terms of assembly, monomer. Interacts with TAH18. Interacts with MIA40. [2Fe-2S] cluster serves as cofactor. It depends on [4Fe-4S] cluster as a cofactor.

It is found in the cytoplasm. The protein resides in the mitochondrion intermembrane space. Component of the cytosolic iron-sulfur (Fe-S) protein assembly (CIA) machinery required for the maturation of extramitochondrial Fe-S proteins. Part of an electron transfer chain functioning in an early step of cytosolic Fe-S biogenesis, facilitating the de novo assembly of a [4Fe-4S] cluster on the scaffold complex CFD1-NBP35. Electrons are transferred to DRE2 from NADPH via the FAD- and FMN-containing protein TAH18. TAH18-DRE2 are also required for the assembly of the diferric tyrosyl radical cofactor of ribonucleotide reductase (RNR), probably by providing electrons for reduction during radical cofactor maturation in the catalytic small subunit RNR2. The sequence is that of Fe-S cluster assembly protein DRE2 from Botryotinia fuckeliana (strain B05.10) (Noble rot fungus).